A 497-amino-acid polypeptide reads, in one-letter code: GDP-fucose protein O-fucosyltransferase 4 (497 aa).

At 1–6 the chain is on the cytoplasmic side; that stretch reads MACRRR. Residues 7–27 traverse the membrane as a helical; Signal-anchor for type II membrane protein segment; the sequence is LLPCAGLGLFGVLCWVWVSFA. Topologically, residues 28–497 are lumenal; sequence SFPDDQLPLE…ITERRARGKH (470 aa). N-linked (GlcNAc...) asparagine glycosylation is present at Asn169. Cysteines 392 and 395 form a disulfide. The interval 406–427 is disordered; it reads RAHRKDPERNPPPLPKMASNSH. Asn474 carries an N-linked (GlcNAc...) asparagine glycan.

It belongs to the glycosyltransferase 10 family.

Its subcellular location is the endoplasmic reticulum membrane. The catalysed reaction is L-threonyl-[protein] + GDP-beta-L-fucose = 3-O-(alpha-L-fucosyl)-L-threonyl-[protein] + GDP + H(+). It catalyses the reaction L-seryl-[protein] + GDP-beta-L-fucose = 3-O-(alpha-L-fucosyl)-L-seryl-[protein] + GDP + H(+). It participates in protein modification; protein glycosylation. Protein O-fucosyltransferase that specifically catalyzes O-fucosylation of serine or threonine residues in EMI domains of target proteins. Attaches fucose through an O-glycosidic linkage. O-fucosylation of EMI domain-containing proteins may be required for facilitating protein folding and secretion. The protein is GDP-fucose protein O-fucosyltransferase 4 (fut11) of Oryzias latipes (Japanese rice fish).